Consider the following 41-residue polypeptide: Photosystem I reaction center subunit IX (41 aa).

A helical membrane pass occupies residues 7-27 (YLSTAPVLLTIWLTFTAGFII).

Belongs to the PsaJ family.

Its subcellular location is the plastid. The protein resides in the chloroplast thylakoid membrane. May help in the organization of the PsaE and PsaF subunits. The protein is Photosystem I reaction center subunit IX of Phaeodactylum tricornutum (strain CCAP 1055/1).